The primary structure comprises 90 residues: Cell division topological specificity factor (90 aa).

The protein belongs to the MinE family.

In terms of biological role, prevents the cell division inhibition by proteins MinC and MinD at internal division sites while permitting inhibition at polar sites. This ensures cell division at the proper site by restricting the formation of a division septum at the midpoint of the long axis of the cell. The polypeptide is Cell division topological specificity factor (Clostridium perfringens (strain ATCC 13124 / DSM 756 / JCM 1290 / NCIMB 6125 / NCTC 8237 / Type A)).